We begin with the raw amino-acid sequence, 145 residues long: Extracellular globin-2 (145 aa).

Positions 3-145 (QCGVLEGLKV…HIEDGIKGHH (143 aa)) constitute a Globin domain. A disulfide bond links C4 and C133. H96 lines the heme b pocket.

It belongs to the globin family. The extracellular hemoglobin of the earthworm consists of 12 subunits that have a hexagonal bilayer structure with a molecular weight near 3.8 million. Each one-twelfth subunit is composed primarily of disulfide linked trimers (chains A, B, and C) and monomers (chain D).

The chain is Extracellular globin-2 from Lumbricus terrestris (Common earthworm).